The primary structure comprises 155 residues: Endoribonuclease YbeY (155 aa).

The Zn(2+) site is built by His-114, His-118, and His-124.

Belongs to the endoribonuclease YbeY family. It depends on Zn(2+) as a cofactor.

Its subcellular location is the cytoplasm. Single strand-specific metallo-endoribonuclease involved in late-stage 70S ribosome quality control and in maturation of the 3' terminus of the 16S rRNA. The protein is Endoribonuclease YbeY of Shigella dysenteriae serotype 1 (strain Sd197).